The sequence spans 235 residues: Ribosome maturation factor RimM (235 aa).

Positions 1-19 are enriched in basic and acidic residues; it reads MKHEEANKEIGGRGAEGQR. Residues 1–49 form a disordered region; sequence MKHEEANKEIGGRGAEGQRSKRVGGNSKIQNIQSPAPNPQPIVPNTQSP. In terms of domain architecture, PRC barrel spans 150–230; that stretch reads EDEYHVLDLI…RIEITPPPGL (81 aa).

It belongs to the RimM family. Binds ribosomal protein uS19.

It is found in the cytoplasm. In terms of biological role, an accessory protein needed during the final step in the assembly of 30S ribosomal subunit, possibly for assembly of the head region. Essential for efficient processing of 16S rRNA. May be needed both before and after RbfA during the maturation of 16S rRNA. It has affinity for free ribosomal 30S subunits but not for 70S ribosomes. This Nostoc punctiforme (strain ATCC 29133 / PCC 73102) protein is Ribosome maturation factor RimM.